A 472-amino-acid chain; its full sequence is Glutamate--tRNA ligase (472 aa).

Positions 9 to 19 (PSPTGYLHVGG) match the 'HIGH' region motif. Zn(2+)-binding residues include Cys98, Cys100, Cys125, and His127. Positions 237-241 (KLSKR) match the 'KMSKS' region motif. Lys240 lines the ATP pocket.

Belongs to the class-I aminoacyl-tRNA synthetase family. Glutamate--tRNA ligase type 1 subfamily. Monomer. Zn(2+) is required as a cofactor.

The protein resides in the cytoplasm. It carries out the reaction tRNA(Glu) + L-glutamate + ATP = L-glutamyl-tRNA(Glu) + AMP + diphosphate. Functionally, catalyzes the attachment of glutamate to tRNA(Glu) in a two-step reaction: glutamate is first activated by ATP to form Glu-AMP and then transferred to the acceptor end of tRNA(Glu). The polypeptide is Glutamate--tRNA ligase (Klebsiella pneumoniae subsp. pneumoniae (strain ATCC 700721 / MGH 78578)).